Reading from the N-terminus, the 223-residue chain is Orotate phosphoribosyltransferase (223 aa).

5-phospho-alpha-D-ribose 1-diphosphate-binding positions include R107, K108, K111, H113, and 133–141 (EDLTTAGGS). An orotate-binding site is contributed by T137. The span at 192 to 211 (SPGSRSSSTTRRCRKSSPSS) shows a compositional bias: low complexity. Positions 192–212 (SPGSRSSSTTRRCRKSSPSSM) are disordered.

It belongs to the purine/pyrimidine phosphoribosyltransferase family. PyrE subfamily. As to quaternary structure, homodimer. Mg(2+) serves as cofactor.

It carries out the reaction orotidine 5'-phosphate + diphosphate = orotate + 5-phospho-alpha-D-ribose 1-diphosphate. The protein operates within pyrimidine metabolism; UMP biosynthesis via de novo pathway; UMP from orotate: step 1/2. Functionally, catalyzes the transfer of a ribosyl phosphate group from 5-phosphoribose 1-diphosphate to orotate, leading to the formation of orotidine monophosphate (OMP). The polypeptide is Orotate phosphoribosyltransferase (pyrE) (Rhizobium leguminosarum bv. trifolii).